A 974-amino-acid chain; its full sequence is MAKAGRAGGPPPGGGAPWHLRNVLSDSVESSDDEFFDAREEMAEGKNAILIGMSQWNSNDLVEQIETMGKLDEHQGEGTAPCTSSILQEKQRELYRVSLRRQRFPAQGSIEIHEDSEEGCPQRSCKTHVLLLVLHGGNILDTGAGDPSCKAADIHTFSSVLEKVTRAHFPAALGHILIKFVPCPAICSEAFSLVSHLNPYSHDEGCLSSSQDHVPLAALPLLAISSPQYQDAVATVIERANQVYREFLKSSDGIGFSGQVCLIGDCVGGLLAFDAICYSAGPSGDSPASSSRKGSISSTQDTPVAVEEDCSLASSKRLSKSNIDISSGLEDEEPKRPLPRKQSDSSTYDCEAITQHHAFLSSIHSSVLKDESETPAAGGPQLPEVSLGRFDFDVSDFFLFGSPLGLVLAMRRTVLPGLDGFQVRPACSQVYSFFHCADPSASRLEPLLEPKFHLVPPVSVPRYQRFPLGDGQSLLLADALHTHSPLFLEGSSRDSPPLLDAPASPPQASRFQRPGRRMSEGSSHSESSESSDSMAPVGASRITAKWWGSKRIDYALYCPDVLTAFPTVALPHLFHASYWESTDVVAFILRQVMRYESVNIKESARLDPAALSPANPREKWLRKRTQVKLRNVTANHRANDVIAAEDGPQVLVGRFMYGPLDMVALTGEKVDILVMAEPSSGRWVHLDTEITNSSGRITYNVPRPRRLGVGVYPVKMVVRGDQTCAMSYLTVLPRGMECVVFSIDGSFAASVSIMGSDPKVRPGAVDVVRHWQDLGYMILYITGRPDMQKQRVVSWLSQHNFPQGMIFFSDGLVHDPLRQKAIFLRNLMQECFIKISAAYGSTKDISVYSVLGLPASQIFIVGRPTKKYQTQCQFLSEGYAAHLAALEASHRSRPKKNNSRMILRKGSFGLHAQPEFLRKRNHLRRTMSVQQPDPPAANPKPERAQSQPESDKDHERPLPALSWARGPPKFESVP.

Phosphoserine occurs at positions 30, 31, 109, 295, 298, 321, 343, and 495. Residues 284–304 (GDSPASSSRKGSISSTQDTPV) form a disordered region. Residues 292–302 (RKGSISSTQDT) show a composition bias toward polar residues. 2 disordered regions span residues 323 to 346 (IDISSGLEDEEPKRPLPRKQSDSS) and 491 to 536 (SSRD…SMAP). A DDHD domain is found at 390–594 (FDFDVSDFFL…VAFILRQVMR (205 aa)). Over residues 520 to 533 (EGSSHSESSESSDS) the composition is skewed to low complexity. A phosphoserine mark is found at S612, S907, S928, and S946. Residues 927–974 (MSVQQPDPPAANPKPERAQSQPESDKDHERPLPALSWARGPPKFESVP) are disordered.

This sequence belongs to the PtdIns transfer protein family. PI transfer class IIA subfamily. As to quaternary structure, interacts with PTK2B via its C-terminus. Detected in brain and spleen, and at low levels in ovary.

The protein resides in the endomembrane system. Its function is as follows. Catalyzes the transfer of phosphatidylinositol and phosphatidylcholine between membranes (in vitro). Binds calcium ions. This Homo sapiens (Human) protein is Membrane-associated phosphatidylinositol transfer protein 3 (PITPNM3).